Reading from the N-terminus, the 150-residue chain is Clitocypin (150 aa).

Belongs to the protease inhibitor I48 family. Homodimer. Uniformly expressed throughout the mature fruiting body (at mRNA and protein level).

In terms of biological role, binds and inhibits cysteine proteinases. Inhibits most strongly papain and cathepsin L, more weakly bromelain and cathepsin B while it is completely ineffective against cathepsin H. The chain is Clitocypin (Cnc1) from Clitocybe nebularis (Clouded agaric).